A 565-amino-acid polypeptide reads, in one-letter code: MQFTHKKNRSLYIPYAGPVLLEFPLLNKGSAFSMEERSNFNLLGLLPEVVETIEEQAERAWIQYQGFKTEIDKHIYLRNIQDTNETLFYRLIGNHLEEMMPVIYTPTVGAACERFSEIYRRARGVFISYQNRHNLDDILQNVPNHNVKVIVVTDGERILGLGDQGIGGMGIPIGKLSLYTTCGGISPAYTLPIVLDVGTNNQQLLDDPLYMGWRHPRITDDEYYQFVDDVIQAIKARWPDVLLQFEDFAQKNAMPLLNRYRNEICSFNDDIQGTAAVTVGTLIAASRGAGSQLSEQKIVFLGAGSAGCGIAEQIIAQIVREGLSEEEARQRVFMVDRFGLLTDGMPNLLPFQNKLVQKREQLQSWDTTSEALSLLDVVRNVKPNILIGVSGQPGLFTEEIIREMHKHCPRPIVMPLSNPTSRVEATPQNILSWTDGEALVATGSPFSPVTVKGKQYPIAQCNNSYIFPGIGLGVIASGASRVTDEMLMAASETLAQHSPLVNNGEGPVLPELKDIQTVSRAIAFAVGKVAQEQGVAVKTSAEALLQAISDNFWLPEYRNYRRTSI.

Y104 acts as the Proton donor in catalysis. R157 lines the NAD(+) pocket. Catalysis depends on K175, which acts as the Proton acceptor. Positions 246, 247, and 270 each coordinate a divalent metal cation. Residues D270 and N418 each coordinate NAD(+).

The protein belongs to the malic enzymes family. As to quaternary structure, homotetramer. It depends on Mg(2+) as a cofactor. Requires Mn(2+) as cofactor.

It catalyses the reaction (S)-malate + NAD(+) = pyruvate + CO2 + NADH. The catalysed reaction is oxaloacetate + H(+) = pyruvate + CO2. The protein is NAD-dependent malic enzyme of Klebsiella pneumoniae subsp. pneumoniae (strain ATCC 700721 / MGH 78578).